A 561-amino-acid polypeptide reads, in one-letter code: Cation diffusion facilitator family protein 1 (561 aa).

A compositionally biased stretch (basic and acidic residues) spans 1–20 (MEVTMEDRSVKADKADRDDN). The tract at residues 1 to 26 (MEVTMEDRSVKADKADRDDNNTTSTE) is disordered. At 1–112 (MEVTMEDRSV…SESVKGVSRS (112 aa)) the chain is on the cytoplasmic side. A helical transmembrane segment spans residues 113–133 (LIIQIGMTVIFCALEFITGVV). Residues 134–136 (CSS) lie on the Extracellular side of the membrane. Residues 137–157 (IAMLADSYHMAADVMALIVAF) form a helical membrane-spanning segment. Residues 158–176 (TCIKIATRPSTRLGYGWVR) are Cytoplasmic-facing. Residues 177–197 (AETLGGFFNGIFMCTVCVLVF) form a helical membrane-spanning segment. Residues 198-215 (QEAVGRIINVHMITHPLQ) are Extracellular-facing. A helical transmembrane segment spans residues 216–236 (VLVIGFIGLLINLFGMFNLSG). The Cytoplasmic portion of the chain corresponds to 237 to 391 (HGHSHGGGSH…NVNIHGVWLH (155 aa)). The interval 240–304 (SHGGGSHGHS…HTRLNGKFRS (65 aa)) is disordered. A 6 X 2 AA approximate repeats of H-G region spans residues 246–270 (HGHSHGGSHGHSHNNKKTKKNDGHG). Residues 247-264 (GHSHGGSHGHSHNNKKTK) show a composition bias toward basic residues. A helical membrane pass occupies residues 392-412 (LLSDAFGSVIVMISAGFVYFL). At 413-420 (PTWKIAAY) the chain is on the extracellular side. A helical membrane pass occupies residues 421–441 (LDPILSISLASIMGFTAVVLV). Over 442-561 (KTSGEKLLKQ…SVSTENEITE (120 aa)) the chain is Cytoplasmic.

This sequence belongs to the cation diffusion facilitator (CDF) transporter (TC 2.A.4) family. SLC30A subfamily. In terms of assembly, interacts with lin-45 in a zinc-dependent manner. Expressed in intestinal cells. Expressed in the vulva.

The protein resides in the basolateral cell membrane. Its function is as follows. Involved in the regulation of Pn.p cell fate determination. Involved in zinc metabolism and the decrease of the cytosolic zinc concentration which is thought to modulate Ras signaling. Involved in zinc transport from the intestinal lumen to the pseudocoelum. This chain is Cation diffusion facilitator family protein 1 (cdf-1), found in Caenorhabditis elegans.